Reading from the N-terminus, the 437-residue chain is GTPase Era, mitochondrial (437 aa).

A mitochondrion-targeting transit peptide spans 1 to 43; that stretch reads MAAPSWRGARLVQSVLRVWQVGPHVARERVIPFSSLLGFQRRC. Residues 112–330 form the Era-type G domain; the sequence is RVLRVVLLGA…QYLLTQAQPG (219 aa). A G1 region spans residues 120 to 127; sequence GAPNAGKS. 120-127 contributes to the GTP binding site; sequence GAPNAGKS. Residues 146–150 form a G2 region; sequence HTTRC. The segment at 167-170 is G3; sequence DTPG. 167–171 serves as a coordination point for GTP; that stretch reads DTPGI. The residue at position 173 (Ser-173) is a Phosphoserine. 236–239 lines the GTP pocket; that stretch reads NKVD. Residues 236 to 239 form a G4 region; the sequence is NKVD. A disordered region spans residues 271–290; that stretch reads HSHPGTHCPSPAVKDPNTQS. Positions 308 to 310 are G5; the sequence is LSA. The region spanning 360–437 is the KH type-2 domain; sequence LPQEVPYNVQ…DIRLSVKLLK (78 aa).

Belongs to the TRAFAC class TrmE-Era-EngA-EngB-Septin-like GTPase superfamily. Era GTPase family.

The protein localises to the mitochondrion matrix. It is found in the mitochondrion inner membrane. In terms of biological role, probable GTPase that plays a role in the mitochondrial ribosomal small subunit assembly. Specifically binds the 12S mitochondrial rRNA (12S mt-rRNA) to a 33 nucleotide section delineating the 3' terminal stem-loop region. May act as a chaperone that protects the 12S mt-rRNA on the 28S mitoribosomal subunit during ribosomal small subunit assembly. This Homo sapiens (Human) protein is GTPase Era, mitochondrial (ERAL1).